We begin with the raw amino-acid sequence, 1124 residues long: uncharacterized protein (1124 aa).

An N-terminal signal peptide occupies residues 1–28; it reads MALFPRSILIALVLSFVLNLGLVTKIHA. 7 helical membrane passes run 332-352, 359-379, 393-413, 495-515, 522-542, 555-575, and 700-720; these read IVTA…LLAG, EYIN…GINI, MIQW…SWVM, MLVS…AFMV, MISI…FLFA, MISF…MFAV, and IKNI…MYNF.

The protein belongs to the TrbL/VirB6 family.

It localises to the cell membrane. This is an uncharacterized protein from Rickettsia prowazekii (strain Madrid E).